The following is a 400-amino-acid chain: Nicotinate phosphoribosyltransferase (400 aa).

The residue at position 220 (His220) is a Phosphohistidine; by autocatalysis.

This sequence belongs to the NAPRTase family. Transiently phosphorylated on a His residue during the reaction cycle. Phosphorylation strongly increases the affinity for substrates and increases the rate of nicotinate D-ribonucleotide production. Dephosphorylation regenerates the low-affinity form of the enzyme, leading to product release.

The catalysed reaction is nicotinate + 5-phospho-alpha-D-ribose 1-diphosphate + ATP + H2O = nicotinate beta-D-ribonucleotide + ADP + phosphate + diphosphate. It functions in the pathway cofactor biosynthesis; NAD(+) biosynthesis; nicotinate D-ribonucleotide from nicotinate: step 1/1. Its function is as follows. Catalyzes the synthesis of beta-nicotinate D-ribonucleotide from nicotinate and 5-phospho-D-ribose 1-phosphate at the expense of ATP. The chain is Nicotinate phosphoribosyltransferase from Escherichia fergusonii (strain ATCC 35469 / DSM 13698 / CCUG 18766 / IAM 14443 / JCM 21226 / LMG 7866 / NBRC 102419 / NCTC 12128 / CDC 0568-73).